We begin with the raw amino-acid sequence, 443 residues long: Glucose-6-phosphate isomerase (443 aa).

Residue glutamate 285 is the Proton donor of the active site. Catalysis depends on residues histidine 306 and lysine 420.

It belongs to the GPI family.

It localises to the cytoplasm. It catalyses the reaction alpha-D-glucose 6-phosphate = beta-D-fructose 6-phosphate. It functions in the pathway carbohydrate biosynthesis; gluconeogenesis. Its pathway is carbohydrate degradation; glycolysis; D-glyceraldehyde 3-phosphate and glycerone phosphate from D-glucose: step 2/4. Functionally, catalyzes the reversible isomerization of glucose-6-phosphate to fructose-6-phosphate. The chain is Glucose-6-phosphate isomerase from Staphylococcus haemolyticus (strain JCSC1435).